We begin with the raw amino-acid sequence, 214 residues long: MAALVKQLGLADYASTYEAMQAFTKARTSETLDEIWVLEHPPVFTLGLAGDAGNLHSPSNQISLVQVDRGGEITYHGPGQIVVYLLLDLRRLGIFVKELVSRIEQAVIDTLADFGVQAERHPGAPGIYVSQQSRVPPEWVGAKIAALGLKVSKSCSYHGLALNVATDLEAFKRIHPCGYEGLKTVDMQTLGIKDNMDTISLRLLQHLQKQLIPS.

In terms of domain architecture, BPL/LPL catalytic spans 29–214 (SETLDEIWVL…QHLQKQLIPS (186 aa)). Residues 69–76 (RGGEITYH), 146–148 (ALG), and 159–161 (GLA) each bind substrate. The active-site Acyl-thioester intermediate is Cys177.

The protein belongs to the LipB family.

It is found in the cytoplasm. It catalyses the reaction octanoyl-[ACP] + L-lysyl-[protein] = N(6)-octanoyl-L-lysyl-[protein] + holo-[ACP] + H(+). It functions in the pathway protein modification; protein lipoylation via endogenous pathway; protein N(6)-(lipoyl)lysine from octanoyl-[acyl-carrier-protein]: step 1/2. Its function is as follows. Catalyzes the transfer of endogenously produced octanoic acid from octanoyl-acyl-carrier-protein onto the lipoyl domains of lipoate-dependent enzymes. Lipoyl-ACP can also act as a substrate although octanoyl-ACP is likely to be the physiological substrate. This is Octanoyltransferase from Polynucleobacter necessarius subsp. necessarius (strain STIR1).